We begin with the raw amino-acid sequence, 213 residues long: Cell wall protein PGA62 (213 aa).

Residues 1–18 form the signal peptide; it reads MQFSSAVVLSAVAGSALA. Asparagine 22 carries an N-linked (GlcNAc...) asparagine glycan. Residues 120 to 194 are disordered; the sequence is CPLPSTEAPG…APAVSTAEAG (75 aa). Positions 145-172 are enriched in polar residues; sequence PVPTTAAESSPAKTTAAESSPAQETTPK. The span at 173 to 194 shows a compositional bias: low complexity; that stretch reads TVAAESSSAETTAPAVSTAEAG. A lipid anchor (GPI-anchor amidated glycine) is attached at glycine 194. The propeptide at 195–213 is removed in mature form; the sequence is AAANAVPVAAGLLALAALF.

This sequence belongs to the HWP1 family. N- and O-glycosylated. In terms of processing, the GPI-anchor is attached to the protein in the endoplasmic reticulum and serves to target the protein to the cell surface. There, the glucosamine-inositol phospholipid moiety is cleaved off and the GPI-modified mannoprotein is covalently attached via its lipidless GPI glycan remnant to the 1,6-beta-glucan of the outer cell wall layer.

The protein localises to the secreted. It is found in the cell wall. It localises to the membrane. Its function is as follows. Cell wall protein necessary for cell wall integrity. Plays only a minor role in hyphal morphogenesis and is not critical to biofilm formation. This is Cell wall protein PGA62 (PGA62) from Candida albicans (strain SC5314 / ATCC MYA-2876) (Yeast).